Consider the following 384-residue polypeptide: Probable circularly permuted 1,3-beta-glucanase PGA52 (384 aa).

Positions 1–17 (MLFSSLLVSTLVSVATA) are cleaved as a signal peptide. 5 N-linked (GlcNAc...) asparagine glycosylation sites follow: Asn-118, Asn-128, Asn-170, Asn-210, and Asn-244. Residues 254 to 259 (EFDIFE) carry the ExDxxE motif motif. 2 N-linked (GlcNAc...) asparagine glycosylation sites follow: Asn-262 and Asn-318. Ser-361 carries GPI-anchor amidated serine lipidation. The propeptide at 362 to 384 (GGVSYQPSFITNLLMTVLTLWVI) is removed in mature form.

Belongs to the PGA52 family.

The protein localises to the cell membrane. The enzyme catalyses Hydrolysis of (1-&gt;3)-beta-D-glucosidic linkages in (1-&gt;3)-beta-D-glucans.. Functionally, probable circularly permuted 1,3-beta-glucanase involved in cell wall modification through beta-1,3-glucan network alterations such as increased branching or remodeling. This chain is Probable circularly permuted 1,3-beta-glucanase PGA52 (PGA52), found in Candida albicans (strain SC5314 / ATCC MYA-2876) (Yeast).